A 266-amino-acid polypeptide reads, in one-letter code: Respiratory nitrate reductase beta chain (266 aa).

2 4Fe-4S ferredoxin-type domains span residues 3–32 (VGMV…AWFN) and 30–61 (WFNN…KREE). The [4Fe-4S] cluster site is built by Cys-12, Cys-15, Cys-18, Cys-22, Cys-39, Cys-42, and Cys-47. Residues Cys-51 and Cys-73 each contribute to the [3Fe-4S] cluster site. Residues Cys-77, Cys-81, Cys-84, Cys-96, and Cys-100 each coordinate [4Fe-4S] cluster.

As to quaternary structure, heterotrimer composed of an alpha, a beta and a gamma chain. Alpha and beta are catalytic chains; gamma chains are involved in binding the enzyme complex to the cytoplasmic membrane. [4Fe-4S] cluster serves as cofactor. It depends on [3Fe-4S] cluster as a cofactor.

It localises to the cell membrane. It is found in the cytoplasm. The catalysed reaction is nitrate + a quinol = a quinone + nitrite + H2O. Its activity is regulated as follows. Inhibited by micromolar concentrations of azide. In terms of biological role, the nitrate reductase enzyme complex allows Bradyrhizobium sp. USDA 3045 to use nitrate as an electron acceptor during anaerobic growth. The beta chain is an electron transfer unit containing four cysteine clusters involved in the formation of iron-sulfur centers. Electrons are transferred from the gamma chain to the molybdenum cofactor of the alpha subunit. The sequence is that of Respiratory nitrate reductase beta chain (narH) from Bradyrhizobium sp.